A 96-amino-acid chain; its full sequence is Co-chaperonin GroES (96 aa).

This sequence belongs to the GroES chaperonin family. Heptamer of 7 subunits arranged in a ring. Interacts with the chaperonin GroEL.

The protein resides in the cytoplasm. In terms of biological role, together with the chaperonin GroEL, plays an essential role in assisting protein folding. The GroEL-GroES system forms a nano-cage that allows encapsulation of the non-native substrate proteins and provides a physical environment optimized to promote and accelerate protein folding. GroES binds to the apical surface of the GroEL ring, thereby capping the opening of the GroEL channel. In Geotalea daltonii (strain DSM 22248 / JCM 15807 / FRC-32) (Geobacter daltonii), this protein is Co-chaperonin GroES.